Consider the following 352-residue polypeptide: Quinolinate synthase (352 aa).

Iminosuccinate contacts are provided by His-48 and Ser-69. Cys-114 lines the [4Fe-4S] cluster pocket. Iminosuccinate-binding positions include Tyr-140–Asn-142 and Ser-157. Cys-201 contacts [4Fe-4S] cluster. Residues His-227–Glu-229 and Thr-244 each bind iminosuccinate. Cys-298 is a [4Fe-4S] cluster binding site.

Belongs to the quinolinate synthase family. Type 1 subfamily. It depends on [4Fe-4S] cluster as a cofactor.

Its subcellular location is the cytoplasm. The enzyme catalyses iminosuccinate + dihydroxyacetone phosphate = quinolinate + phosphate + 2 H2O + H(+). Its pathway is cofactor biosynthesis; NAD(+) biosynthesis; quinolinate from iminoaspartate: step 1/1. Catalyzes the condensation of iminoaspartate with dihydroxyacetone phosphate to form quinolinate. The polypeptide is Quinolinate synthase (Pseudomonas entomophila (strain L48)).